The primary structure comprises 360 residues: Deoxyhypusine hydroxylase (360 aa).

HEAT-like PBS-type repeat units lie at residues 56 to 82, 89 to 115, and 213 to 245; these read LKHELAYVLGQLEDARALPTLKKILQD, VRHEAAEAMGAISDPSVLPILEQYRSD, and ERYRAMFALRNVAHGGGDGAIQAVLALARGLQD. The Fe cation site is built by His58, Glu59, His91, and Glu92. Positions 252, 253, 285, and 286 each coordinate Fe cation.

It belongs to the deoxyhypusine hydroxylase family. Fe(2+) is required as a cofactor.

Its subcellular location is the cytoplasm. The protein localises to the nucleus. It carries out the reaction [eIF5A protein]-deoxyhypusine + AH2 + O2 = [eIF5A protein]-hypusine + A + H2O. The protein operates within protein modification; eIF5A hypusination. Catalyzes the hydroxylation of the N(6)-(4-aminobutyl)-L-lysine intermediate to form hypusine, an essential post-translational modification only found in mature eIF-5A factor. This is Deoxyhypusine hydroxylase from Mycosarcoma maydis (Corn smut fungus).